The following is a 1391-amino-acid chain: ESX-5 secretion system protein EccC5 (1391 aa).

2 helical membrane passes run 38-58 and 65-85; these read WLIV…AMVF and FGGI…MMMF. FtsK domains are found at residues 476 to 678, 858 to 1052, and 1161 to 1354; these read GELL…GAAQ, QPPW…EDAK, and LAPV…DPDE. Residues 499–506, 876–883, and 1178–1185 contribute to the ATP site; these read GTTGSGKS, GAGGSGKT, and GRRECGRT.

As to quaternary structure, part of the ESX-5 / type VII secretion system (T7SS), which is composed of cytosolic and membrane components. The ESX-5 membrane complex is composed of EccB5, EccC5, EccD5 and EccE5.

The protein localises to the cell inner membrane. Part of the ESX-5 specialized secretion system, which is responsible for the secretion of EsxN and a number of PE_PGRS and PPE proteins, including PPE41. In Mycobacterium tuberculosis (strain CDC 1551 / Oshkosh), this protein is ESX-5 secretion system protein EccC5.